A 341-amino-acid polypeptide reads, in one-letter code: D-aspartate oxidase (341 aa).

Methionine 1 carries the post-translational modification Blocked amino end (Met). FAD is bound by residues aspartate 36, lysine 37, threonine 43, serine 44, methionine 50, glycine 307, and isoleucine 311. A Microbody targeting signal motif is present at residues 339 to 341 (SKL).

The protein belongs to the DAMOX/DASOX family. Monomer. Interacts with PEX5; the interaction is direct and required for localization of DDO to the peroxisome. It depends on FAD as a cofactor. In terms of tissue distribution, in the kidney, expressed in epithelial cells of the proximal tubules and in the liver (at protein level).

The protein resides in the peroxisome matrix. It localises to the cytoplasm. It is found in the cytosol. The catalysed reaction is D-aspartate + O2 + H2O = oxaloacetate + H2O2 + NH4(+). The enzyme catalyses D-glutamate + O2 + H2O = H2O2 + 2-oxoglutarate + NH4(+). Inhibited by phenylglyoxal; chemical modification of arginine residues in the enzyme with phenylglyoxal leads to the irreversible loss of activity towards dicarboxylic D-amino acids, paralleled by a transient appearance of activity versus monocarboxylic ones. Functionally, selectively catalyzes the oxidative deamination of acidic amino acids. Suppresses the level of D-aspartate in the brain, an amino acid that can act as an agonist for glutamate receptors. Protects the organism from the toxicity of D-amino acids. May also function in the intestine. This is D-aspartate oxidase (DDO) from Bos taurus (Bovine).